A 156-amino-acid chain; its full sequence is Small ribosomal subunit protein uS7 (156 aa).

The protein belongs to the universal ribosomal protein uS7 family. As to quaternary structure, part of the 30S ribosomal subunit. Contacts proteins S9 and S11.

Functionally, one of the primary rRNA binding proteins, it binds directly to 16S rRNA where it nucleates assembly of the head domain of the 30S subunit. Is located at the subunit interface close to the decoding center, probably blocks exit of the E-site tRNA. In Streptococcus mutans serotype c (strain ATCC 700610 / UA159), this protein is Small ribosomal subunit protein uS7.